The sequence spans 204 residues: Large ribosomal subunit protein eL15y (204 aa).

The protein belongs to the eukaryotic ribosomal protein eL15 family.

The protein is Large ribosomal subunit protein eL15y (SB62) of Picea mariana (Black spruce).